The following is a 154-amino-acid chain: 6,7-dimethyl-8-ribityllumazine synthase (154 aa).

5-amino-6-(D-ribitylamino)uracil contacts are provided by residues tryptophan 22, 56-58 (AWE), and 80-82 (CVV). Residue 85–86 (DT) participates in (2S)-2-hydroxy-3-oxobutyl phosphate binding. Histidine 88 acts as the Proton donor in catalysis. Asparagine 113 contributes to the 5-amino-6-(D-ribitylamino)uracil binding site. Arginine 127 provides a ligand contact to (2S)-2-hydroxy-3-oxobutyl phosphate.

Belongs to the DMRL synthase family. Forms an icosahedral capsid composed of 60 subunits, arranged as a dodecamer of pentamers.

It carries out the reaction (2S)-2-hydroxy-3-oxobutyl phosphate + 5-amino-6-(D-ribitylamino)uracil = 6,7-dimethyl-8-(1-D-ribityl)lumazine + phosphate + 2 H2O + H(+). It functions in the pathway cofactor biosynthesis; riboflavin biosynthesis; riboflavin from 2-hydroxy-3-oxobutyl phosphate and 5-amino-6-(D-ribitylamino)uracil: step 1/2. Its function is as follows. Catalyzes the formation of 6,7-dimethyl-8-ribityllumazine by condensation of 5-amino-6-(D-ribitylamino)uracil with 3,4-dihydroxy-2-butanone 4-phosphate. This is the penultimate step in the biosynthesis of riboflavin. This Xylella fastidiosa (strain M23) protein is 6,7-dimethyl-8-ribityllumazine synthase.